The sequence spans 105 residues: uncharacterized protein (105 aa).

The helical transmembrane segment at 29–49 (NAFLLILSEAYLLFVFLSYLI) threads the bilayer.

Its subcellular location is the membrane. This is an uncharacterized protein from Saccharomyces cerevisiae (strain ATCC 204508 / S288c) (Baker's yeast).